The primary structure comprises 481 residues: Heat stress transcription factor A-1b (481 aa).

The span at 1–16 (MESVPESVPSPNSNTP) shows a compositional bias: low complexity. The disordered stretch occupies residues 1 to 23 (MESVPESVPSPNSNTPSIPPPVN). A DNA-binding region spans residues 25 to 119 (VPPFLSKTYD…LLKSIVRRKP (95 aa)). The segment at 138 to 204 (ACVEVGKFGI…QMMSFLAKAV (67 aa)) is hydrophobic repeat HR-A/B. Residues 213–227 (LVQQNNNDGNRQIPG) are compositionally biased toward polar residues. Positions 213–244 (LVQQNNNDGNRQIPGSNKKRRLPVDEQENRGD) are disordered. Positions 229-233 (NKKRR) match the Nuclear localization signal motif. Residues 234–243 (LPVDEQENRG) are compositionally biased toward basic and acidic residues. The short motif at 418–427 (DPFWEQFFSV) is the AHA element. The Nuclear export signal motif lies at 467 to 474 (LTEQMGLL).

Belongs to the HSF family. Class A subfamily. Homotrimer. Binds to HSBP. Post-translationally, exhibits temperature-dependent phosphorylation.

It localises to the cytoplasm. The protein resides in the nucleus. Its function is as follows. Transcriptional activator that specifically binds DNA sequence 5'-AGAAnnTTCT-3' known as heat shock promoter elements (HSE). The protein is Heat stress transcription factor A-1b (HSFA1B) of Arabidopsis thaliana (Mouse-ear cress).